Here is a 212-residue protein sequence, read N- to C-terminus: MPATVICPSRAEEKLLRKQGFILIAGLDEAGRGCLAGPVVAGAVIMPPRLKGDWVEMVRDSKVLSPAKREYLYCHIVSMAVTFGVGAVDNEQIDSMGIAPATRLAMKQAVEDLTCQPDFLLVDYLKLPDIPLPQKGIVDGDALCFSIACASIVAKVSRDRLMSKLDMEYPGYYLAKHKGYGTALHVECICQKGISPIHRRTFAPLKGMIDGL.

Residues 22 to 212 (ILIAGLDEAG…APLKGMIDGL (191 aa)) form the RNase H type-2 domain. Positions 28, 29, and 123 each coordinate a divalent metal cation.

This sequence belongs to the RNase HII family. The cofactor is Mn(2+). Requires Mg(2+) as cofactor.

It localises to the cytoplasm. It catalyses the reaction Endonucleolytic cleavage to 5'-phosphomonoester.. Its function is as follows. Endonuclease that specifically degrades the RNA of RNA-DNA hybrids. This is Ribonuclease HII from Dehalococcoides mccartyi (strain ATCC BAA-2100 / JCM 16839 / KCTC 5957 / BAV1).